The chain runs to 125 residues: Allatostatin (125 aa).

An N-terminal signal peptide occupies residues M1–A26. A propeptide spanning residues A27 to D106 is cleaved from the precursor. Q109 carries the pyrrolidone carboxylic acid modification.

The protein belongs to the allatostatin family.

It localises to the secreted. In terms of biological role, strongly inhibits juvenile hormone biosynthesis in vitro by the corpora allata from fifth-stadium larvae and adult females. In Spodoptera frugiperda (Fall armyworm), this protein is Allatostatin.